The primary structure comprises 427 residues: Adenylosuccinate synthetase (427 aa).

Residues 12–18 (GDEGKGK) and 40–42 (GHT) each bind GTP. Asp13 functions as the Proton acceptor in the catalytic mechanism. 2 residues coordinate Mg(2+): Asp13 and Gly40. IMP-binding positions include 13 to 16 (DEGK), 38 to 41 (NAGH), Thr127, Arg141, Gln222, Thr237, and Arg301. The Proton donor role is filled by His41. 297–303 (VVTKRPR) is a substrate binding site. Residues Arg303, 329–331 (SLD), and 411–413 (AVG) contribute to the GTP site.

Belongs to the adenylosuccinate synthetase family. In terms of assembly, homodimer. Mg(2+) serves as cofactor.

It localises to the cytoplasm. It carries out the reaction IMP + L-aspartate + GTP = N(6)-(1,2-dicarboxyethyl)-AMP + GDP + phosphate + 2 H(+). Its pathway is purine metabolism; AMP biosynthesis via de novo pathway; AMP from IMP: step 1/2. Functionally, plays an important role in the de novo pathway of purine nucleotide biosynthesis. Catalyzes the first committed step in the biosynthesis of AMP from IMP. This Leuconostoc citreum (strain KM20) protein is Adenylosuccinate synthetase.